Here is a 1338-residue protein sequence, read N- to C-terminus: MWGRKRPNSSGETRGILSGNRGVDYGSGRGQSGPFEGRWRKLPKMPEAVGTDPSTSRKMAELEEVTLDGKPLQALRVTDLKAALEQRGLAKSGQKSALVKRLKGALMLENLQKHSTPHAAFQPNSQIGEEMSQNSFIKQYLEKQQELLRQRLEREAREAAELEEASAESEDEMTHPEGVASLLPPDFQSSLNRPELELSTHSPRKSSSFSEEKGESDDEKPRKGERRSSRVRQAKSKLPEYSQTAEEEEDQETPSRNLRVRADRNLKIEEEEEEEEEEEDDDDEEEEEVDEAQKSREAEAPTLKQFEDEEGEERTRAKPEKVVDEKPLNIRSQEKGELEKGGRVTRSQEEARRSHLARQQQEKETQIVSLPQEENEVKSSQSLEEKSQSPSPPPLPEDLEKAPVVLQPEQIVSEEETPPPLLTKEASSPPTHIQLQEEMEPVEGPAPPVLIQLSPPNTDAGAREPLASPHPAQLLRSLSPLSGTTDTKAESPAGRVSDESVLPLAQKSSLPECSTQKGVESEREKSAPLPLTVEEFAPAKGITEEPMKKQSLEQKEGRRASHALFPEHSGKQSADSSSSRSSSPSSSSSPSRSPSPDSVASRPQSSPGSKQRDGAQARVHANPHERPKMGSRSTSESRSRSRSRSRSASSSSRKSLSPGVSRDSNTSYTETKDPSCGQEAAAPSGPQLQVLEPKEKAPTFSASVRGRHLSHPEPEQQHVIQRLQPEQGSPKKCEAEEAEPPAATQPQTSETQISHLLESERTHHTVEEKEEVTMDTSENRPENEVPEPPLPVADQVSNDERPEGGAEEEEKKESSMPKSFKRKISVVSATKGVQAGNSDTEGGQPGRKRRWGASTAATQKKPSISITTESLKSLIPDIKPLAGQEAVVDLHADDSRISEDETERNGDDGTHDKGLKICRTVTQVVPAEGQENGQREEEEEKEPEAELPAPPQVSVEVALPPPVEHEVKKVTLGDTLTRRSISQQKSGVSITIDDPVRTAQVPSPPRGKISNIVHISNLVRPFTLGQLKELLGRTGTLVEEAFWIDKIKSHCFVTYSTVEEAVATRTALHGVKWPQSNPKFLCADYAEQDELDYHRGLLVDRPSETKAEEQGAPRPLHPPPPPPVQPPPHPRAEQREQERAVREQWAEREREMERRERTRSEREWDRDKVREGPRSRSRSRDRRRKERAKSKEKKSEKKEKAQEEPPAKLLDDLFRKTKAAPCIYWLPLTESQIVQKEAEQAERAKEREKRRKEREEEEQKEREKEAERERNRQLEREKRREHSRERERDRERERDRGDRERERERDRDRGRERDRRDTKRHSRSRSRSTPVRDRGGRR.

Positions 1–57 (MWGRKRPNSSGETRGILSGNRGVDYGSGRGQSGPFEGRWRKLPKMPEAVGTDPSTSR) are disordered. Positions 72-106 (LQALRVTDLKAALEQRGLAKSGQKSALVKRLKGAL) constitute an SAP domain. A phosphoserine mark is found at Ser-132, Ser-166, Ser-169, Ser-208, Ser-210, and Ser-216. The interval 155–866 (EAREAAELEE…ATQKKPSISI (712 aa)) is disordered. Over residues 161 to 171 (ELEEASAESED) the composition is skewed to acidic residues. Residues 219–228 (EKPRKGERRS) are compositionally biased toward basic and acidic residues. Ser-242 is modified (phosphoserine). A Phosphothreonine modification is found at Thr-253. Lys-267 is covalently cross-linked (Glycyl lysine isopeptide (Lys-Gly) (interchain with G-Cter in SUMO1)). A compositionally biased stretch (acidic residues) spans 269–290 (EEEEEEEEEEEDDDDEEEEEVD). Ser-295 is subject to Phosphoserine. Over residues 313–353 (ERTRAKPEKVVDEKPLNIRSQEKGELEKGGRVTRSQEEARR) the composition is skewed to basic and acidic residues. Residue Lys-318 forms a Glycyl lysine isopeptide (Lys-Gly) (interchain with G-Cter in SUMO2) linkage. Phosphoserine occurs at positions 332 and 369. Lys-378 participates in a covalent cross-link: Glycyl lysine isopeptide (Lys-Gly) (interchain with G-Cter in SUMO2). A phosphoserine mark is found at Ser-387, Ser-389, Ser-391, and Ser-413. Phosphothreonine occurs at positions 417 and 423. The span at 425 to 434 (EASSPPTHIQ) shows a compositional bias: polar residues. Residues Ser-454, Ser-477, Ser-479, Ser-491, and Ser-497 each carry the phosphoserine modification. Residues 506–518 (QKSSLPECSTQKG) show a composition bias toward polar residues. The span at 542-559 (ITEEPMKKQSLEQKEGRR) shows a compositional bias: basic and acidic residues. Residue Ser-561 is modified to Phosphoserine. 2 stretches are compositionally biased toward low complexity: residues 573–603 (SADSSSSRSSSPSSSSSPSRSPSPDSVASRP) and 646–662 (RSASSSSRKSLSPGVSR). An N6,N6,N6-trimethyllysine; by EHMT2; alternate modification is found at Lys-654. Lys-654 bears the N6,N6-dimethyllysine; by EHMT2; alternate mark. 4 positions are modified to phosphoserine: Ser-655, Ser-657, Ser-710, and Ser-729. A Glycyl lysine isopeptide (Lys-Gly) (interchain with G-Cter in SUMO2) cross-link involves residue Lys-732. A compositionally biased stretch (polar residues) spans 744–754 (TQPQTSETQIS). 2 stretches are compositionally biased toward basic and acidic residues: residues 757 to 767 (LESERTHHTVE) and 798 to 815 (NDERPEGGAEEEEKKESS). 2 positions are modified to phosphoserine: Ser-825 and Ser-838. Residues 855 to 866 (TAATQKKPSISI) show a composition bias toward polar residues. Lys-861 bears the N6-acetyllysine; alternate mark. Residue Lys-861 forms a Glycyl lysine isopeptide (Lys-Gly) (interchain with G-Cter in SUMO2); alternate linkage. A Glycyl lysine isopeptide (Lys-Gly) (interchain with G-Cter in SUMO2) cross-link involves residue Lys-879. Residues 892 to 915 (ADDSRISEDETERNGDDGTHDKGL) show a composition bias toward basic and acidic residues. A disordered region spans residues 892-950 (ADDSRISEDETERNGDDGTHDKGLKICRTVTQVVPAEGQENGQREEEEEKEPEAELPAP). Residues Ser-895 and Ser-898 each carry the phosphoserine modification. The segment covering 936 to 945 (EEEEEKEPEA) has biased composition (acidic residues). A Glycyl lysine isopeptide (Lys-Gly) (interchain with G-Cter in SUMO2) cross-link involves residue Lys-969. Thr-975 carries the post-translational modification Phosphothreonine. Residues Ser-986, Ser-989, and Ser-1003 each carry the phosphoserine modification. Glycyl lysine isopeptide (Lys-Gly) (interchain with G-Cter in SUMO2) cross-links involve residues Lys-1046 and Lys-1106. Disordered regions lie at residues 1104–1214 (ETKA…DDLF) and 1226–1338 (LPLT…GGRR). The span at 1115–1129 (PLHPPPPPPVQPPPH) shows a compositional bias: pro residues. The segment covering 1130–1174 (PRAEQREQERAVREQWAEREREMERRERTRSEREWDRDKVREGPR) has biased composition (basic and acidic residues). Basic residues predominate over residues 1175-1192 (SRSRSRDRRRKERAKSKE). Phosphoserine; by SRPK2 and PKB/AKT1 is present on Ser-1179. Composition is skewed to basic and acidic residues over residues 1193-1214 (KKSEKKEKAQEEPPAKLLDDLF) and 1236-1317 (KEAE…DRRD). The segment at 1209 to 1236 (LLDDLFRKTKAAPCIYWLPLTESQIVQK) is sufficient for interaction with RNPS1 and SAP18 and formation of the ASAP complex.

As to quaternary structure, found in a mRNA splicing-dependent exon junction complex (EJC). Component of the heterotrimeric ASAP (apoptosis- and splicing-associated protein) complexes consisting of RNPS1, SAP18 and different isoforms of ACIN1; the association of SAP18 seems to require a preformed RNPS1:ACIN1 complex. Interacts with API5. Interacts with SRPK2 in a phosphorylation-dependent manner. In terms of processing, undergoes proteolytic cleavage; the processed form is active, contrary to the uncleaved form. Phosphorylation on Ser-1179 by SRPK2 up-regulates its stimulatory effect on cyclin A1.

Its subcellular location is the nucleus. It is found in the nucleus speckle. The protein resides in the nucleoplasm. Functionally, auxiliary component of the splicing-dependent multiprotein exon junction complex (EJC) deposited at splice junction on mRNAs. The EJC is a dynamic structure consisting of core proteins and several peripheral nuclear and cytoplasmic associated factors that join the complex only transiently either during EJC assembly or during subsequent mRNA metabolism. Component of the ASAP complexes which bind RNA in a sequence-independent manner and are proposed to be recruited to the EJC prior to or during the splicing process and to regulate specific excision of introns in specific transcription subsets; ACIN1 confers RNA-binding to the complex. The ASAP complex can inhibit RNA processing during in vitro splicing reactions. The ASAP complex promotes apoptosis and is disassembled after induction of apoptosis. Involved in the splicing modulation of BCL2L1/Bcl-X (and probably other apoptotic genes); specifically inhibits formation of proapoptotic isoforms such as Bcl-X(S); the activity is different from the established EJC assembly and function. Induces apoptotic chromatin condensation after activation by CASP3. Regulates cyclin A1, but not cyclin A2, expression in leukemia cells. The chain is Apoptotic chromatin condensation inducer in the nucleus (Acin1) from Mus musculus (Mouse).